Reading from the N-terminus, the 155-residue chain is MAPK regulated corepressor interacting protein 2 (155 aa).

At methionine 1 the chain carries N-acetylmethionine. The tract at residues 1–59 (MYTITKGPSKLVAQRRTGPTQQQVESRLGELLKCRHSAPTPQHPRAQPPGPWPLSSPGP) is disordered. Arginine 35 carries the post-translational modification Omega-N-methylarginine. The segment covering 46–56 (AQPPGPWPLSS) has biased composition (pro residues). Serine 56 bears the Phosphoserine mark. Arginine 60 carries the post-translational modification Omega-N-methylarginine. A Phosphoserine modification is found at serine 77.

It belongs to the MCRIP family. As to quaternary structure, interacts with DDX6. Interacts with MCRIP1.

The protein resides in the cytoplasm. Its subcellular location is the stress granule. It is found in the nucleus. The chain is MAPK regulated corepressor interacting protein 2 (MCRIP2) from Bos taurus (Bovine).